The chain runs to 591 residues: Laccase (591 aa).

A signal peptide spans 1–20; the sequence is MPSFFRALFSGLIASQLSWA. Plastocyanin-like domains lie at 66 to 189 and 198 to 356; these read VRQY…IQID and IDLG…HPTN. The N-linked (GlcNAc...) asparagine glycan is linked to asparagine 121. The Cu cation site is built by histidine 126, histidine 128, histidine 171, and histidine 173. 2 disulfide bridges follow: cysteine 147–cysteine 571 and cysteine 332–cysteine 366. Asparagine 234, asparagine 242, asparagine 265, and asparagine 323 each carry an N-linked (GlcNAc...) asparagine glycan. 2 N-linked (GlcNAc...) asparagine glycosylation sites follow: asparagine 407 and asparagine 425. One can recognise a Plastocyanin-like 3 domain in the interval 416-551; that stretch reads GHPITQYVIN…AGLGNTFLEQ (136 aa). Residues histidine 463, histidine 466, histidine 468, histidine 533, cysteine 534, histidine 535, and histidine 539 each contribute to the Cu cation site.

Belongs to the multicopper oxidase family. Cu cation serves as cofactor.

Its subcellular location is the secreted. It carries out the reaction 4 hydroquinone + O2 = 4 benzosemiquinone + 2 H2O. Lignin degradation and detoxification of lignin-derived products. The protein is Laccase (LAC-1) of Cryphonectria parasitica (Chestnut blight fungus).